The following is an 801-amino-acid chain: H(+)/Cl(-) exchange transporter 3 (801 aa).

Topologically, residues 1–125 (MESEQLFHRG…WEMTKSLYDA (125 aa)) are cytoplasmic. 3 consecutive short sequence motifs (di-leucine internalization motif; mediates targeting to late endosome and lysosome membranes) follow at residues 28–29 (LL), 46–47 (LL), and 71–75 (LLDLL). The helical transmembrane segment at 126-163 (WSGWLVVTLTGLASGALAGLIDIAADWMTDLKEGICLS) threads the bilayer. N-linked (GlcNAc...) asparagine glycosylation occurs at N177. Residues 209–232 (MNYIMYIFWALSFAFLAVSLVKVF) form a helical membrane-spanning segment. A Selectivity filter part_1 motif is present at residues 238-242 (GSGIP). Residue S239 participates in chloride binding. The segment at residues 241-248 (IPEIKTIL) is an intramembrane region (helical). A run of 2 helical transmembrane segments spans residues 258 to 276 (GKWT…VASG) and 282 to 301 (EGPL…YLFP). Positions 280–284 (GKEGP) match the Selectivity filter part_2 motif. Intramembrane regions (helical) lie at residues 313-325 (VLSA…VSVA) and 329-337 (PIGGVLFSL). The next 3 helical transmembrane spans lie at 349 to 367 (LWRS…RSIN), 391 to 416 (FPFI…AWCR), and 423 to 443 (FGKY…VIAF). N-linked (GlcNAc...) asparagine glycans are attached at residues N451 and N479. Residues 500 to 520 (IWQLCLALIFKIIMTVFTFGI) form a helical membrane-spanning segment. Residues 525-529 (GLFIP) carry the Selectivity filter part_3 motif. F527 is a chloride binding site. 2 consecutive intramembrane regions (helical) follow at residues 555–569 (GLYA…LGGV) and 573–584 (TVSLVVIVFELT). Positions 585-588 (GGLE) form an intramembrane region, note=Loop between two helices. A helical transmembrane segment spans residues 589–607 (YIVPLMAAVMTSKWVGDAF). Residues 608-801 (GREGIYEAHI…NQDPASIMFN (194 aa)) are Cytoplasmic-facing. Residue Y613 coordinates chloride. CBS domains are found at residues 641–705 (MRPR…ARKK) and 738–795 (LDMS…NQDP). Residues 672–674 (YNG) and 779–782 (TKKD) each bind ATP.

The protein belongs to the chloride channel (TC 2.A.49) family. ClC-3/CLCN3 subfamily. As to quaternary structure, monomer and homodimer. Forms heterodimers with CLCN4. In terms of processing, N-glycosylated.

It is found in the early endosome membrane. It localises to the late endosome membrane. The protein localises to the lysosome membrane. Its subcellular location is the cell membrane. Its function is as follows. Strongly outwardly rectifying, electrogenic H(+)/Cl(-)exchanger which mediates the exchange of chloride ions against protons. The CLC channel family contains both chloride channels and proton-coupled anion transporters that exchange chloride or another anion for protons. The presence of conserved gating glutamate residues is typical for family members that function as antiporters. The protein is H(+)/Cl(-) exchange transporter 3 (CLCN3) of Pongo abelii (Sumatran orangutan).